A 621-amino-acid chain; its full sequence is 1-deoxy-D-xylulose-5-phosphate synthase (621 aa).

Thiamine diphosphate contacts are provided by residues histidine 80 and 121 to 123 (GHS). Aspartate 152 is a binding site for Mg(2+). Residues 153–154 (GA), asparagine 181, tyrosine 288, and glutamate 370 each bind thiamine diphosphate. Asparagine 181 serves as a coordination point for Mg(2+).

The protein belongs to the transketolase family. DXPS subfamily. As to quaternary structure, homodimer. It depends on Mg(2+) as a cofactor. The cofactor is thiamine diphosphate.

It catalyses the reaction D-glyceraldehyde 3-phosphate + pyruvate + H(+) = 1-deoxy-D-xylulose 5-phosphate + CO2. It functions in the pathway metabolic intermediate biosynthesis; 1-deoxy-D-xylulose 5-phosphate biosynthesis; 1-deoxy-D-xylulose 5-phosphate from D-glyceraldehyde 3-phosphate and pyruvate: step 1/1. Its function is as follows. Catalyzes the acyloin condensation reaction between C atoms 2 and 3 of pyruvate and glyceraldehyde 3-phosphate to yield 1-deoxy-D-xylulose-5-phosphate (DXP). The polypeptide is 1-deoxy-D-xylulose-5-phosphate synthase (Serratia proteamaculans (strain 568)).